A 380-amino-acid chain; its full sequence is Cysteine protease ATG4A (380 aa).

The active-site Nucleophile is C60. Residues D262 and H264 contribute to the active site. An LIR motif is present at residues 375 to 378; that stretch reads FEIL.

The protein belongs to the peptidase C54 family.

The protein localises to the cytoplasm. The enzyme catalyses [protein]-C-terminal L-amino acid-glycyl-phosphatidylethanolamide + H2O = [protein]-C-terminal L-amino acid-glycine + a 1,2-diacyl-sn-glycero-3-phosphoethanolamine. Cysteine protease that plays a key role in autophagy by mediating both proteolytic activation and delipidation of ATG8 family proteins. The protease activity is required for proteolytic activation of ATG8 family proteins: cleaves the C-terminal amino acid of ATG8 proteins to reveal a C-terminal glycine. Exposure of the glycine at the C-terminus is essential for ATG8 proteins conjugation to phosphatidylethanolamine (PE) and insertion to membranes, which is necessary for autophagy. Protease activity is also required to counteract formation of high-molecular weight conjugates of ATG8 proteins (ATG8ylation): acts as a deubiquitinating-like enzyme that removes ATG8 conjugated to other proteins, such as ATG3. In addition to the protease activity, also mediates delipidation of ATG8 family proteins. Catalyzes delipidation of PE-conjugated forms of ATG8 proteins during macroautophagy. This chain is Cysteine protease ATG4A, found in Gallus gallus (Chicken).